The sequence spans 559 residues: Polypeptide N-acetylgalactosaminyltransferase 1 (559 aa).

Residues 1-8 lie on the Cytoplasmic side of the membrane; it reads MRKFAYCK. A helical; Signal-anchor for type II membrane protein membrane pass occupies residues 9-28; the sequence is VVLATSLIWVLLDMFLLLYF. At 29–559 the chain is on the lumenal side; that stretch reads SECNKCDEKK…LRNVTLPEIF (531 aa). The tract at residues 45–66 is disordered; sequence GDVLEPVQKPHEGPGEMGKPVV. Residue asparagine 95 is glycosylated (N-linked (GlcNAc...) asparagine). Cystine bridges form between cysteine 106-cysteine 339, cysteine 330-cysteine 408, cysteine 442-cysteine 459, cysteine 482-cysteine 497, and cysteine 523-cysteine 540. The segment at 115-225 is catalytic subdomain A; that stretch reads LPTTSVVIVF…VGWLEPLLAR (111 aa). Aspartate 156 and arginine 186 together coordinate substrate. Mn(2+) contacts are provided by aspartate 209 and histidine 211. The tract at residues 285–347 is catalytic subdomain B; it reads PVRTPTMAGG…TCSHVGHVFR (63 aa). A substrate-binding site is contributed by tryptophan 316. Histidine 344 provides a ligand contact to Mn(2+). Substrate contacts are provided by arginine 347 and tyrosine 352. Residues 429–551 form the Ricin B-type lectin domain; that stretch reads SSLGEIRNVE…GSRSQQWLLR (123 aa). A glycan (N-linked (GlcNAc...) asparagine) is linked at asparagine 552.

It belongs to the glycosyltransferase 2 family. GalNAc-T subfamily. Mn(2+) is required as a cofactor.

It localises to the golgi apparatus. The protein localises to the golgi stack membrane. It is found in the secreted. It carries out the reaction L-seryl-[protein] + UDP-N-acetyl-alpha-D-galactosamine = a 3-O-[N-acetyl-alpha-D-galactosaminyl]-L-seryl-[protein] + UDP + H(+). The enzyme catalyses L-threonyl-[protein] + UDP-N-acetyl-alpha-D-galactosamine = a 3-O-[N-acetyl-alpha-D-galactosaminyl]-L-threonyl-[protein] + UDP + H(+). It participates in protein modification; protein glycosylation. Catalyzes the initial reaction in O-linked oligosaccharide biosynthesis, the transfer of an N-acetyl-D-galactosamine residue to a serine or threonine residue on the protein receptor. Has a broad spectrum of substrates such as apomucin-, MUC5AC-, MUC1- and MUC2-derived peptides. This is Polypeptide N-acetylgalactosaminyltransferase 1 from Sus scrofa (Pig).